Reading from the N-terminus, the 323-residue chain is Transcriptional regulator protein Pur-beta-A (323 aa).

Disordered regions lie at residues 1–34, 100–122, and 286–323; these read MADG…QELA, SPEQ…PRRA, and QERQ…VDDD. The residue at position 2 (Ala2) is an N-acetylalanine. Over residues 9–19 the composition is skewed to gly residues; that stretch reads ERGGSSGGPGG. Over residues 24–34 the composition is skewed to basic and acidic residues; the sequence is MSREQETQELA. A DNA-binding region spans residues 27 to 257; the sequence is EQETQELATK…LRVSEVKPSY (231 aa). A compositionally biased stretch (basic and acidic residues) spans 286–305; the sequence is QERQRDKMYERRGPGDRERS. Residues 313 to 323 show a composition bias toward acidic residues; sequence DDSETEDVDDD.

It belongs to the PUR DNA-binding protein family.

The protein resides in the nucleus. In terms of biological role, transcriptional regulator which can act as an activator or a repressor. The chain is Transcriptional regulator protein Pur-beta-A (purb-a) from Xenopus laevis (African clawed frog).